A 614-amino-acid chain; its full sequence is ATP-dependent RNA helicase dbp-3 (614 aa).

Residues 1 to 138 (MSSTKKHSRS…GTTTPAASTN (138 aa)) form a disordered region. A compositionally biased stretch (basic and acidic residues) spans 9-36 (RSEGEEKDARLAKKVKTDETPVDGEVKK). Basic residues-rich tracts occupy residues 37–58 (ERKK…KSKK) and 91–109 (KKEK…KKAK). A compositionally biased stretch (low complexity) spans 117 to 138 (EESTSASKATTNGTTTPAASTN). A Q motif motif is present at residues 180–207 (MNFSQLPQSNLISKNPFAAYTNPTPIQS). The region spanning 210–394 (WPFSLSGRDV…ESYMINPAQV (185 aa)) is the Helicase ATP-binding domain. 223 to 230 (AETGSGKT) lines the ATP pocket. The DEAD box signature appears at 340–343 (DEAD). In terms of domain architecture, Helicase C-terminal spans 435-584 (RLYELLKEAQ…PVPEELLKFG (150 aa)).

This sequence belongs to the DEAD box helicase family. DDX5/DBP2 subfamily.

Its subcellular location is the nucleus. It is found in the nucleolus. It catalyses the reaction ATP + H2O = ADP + phosphate + H(+). Its function is as follows. ATP-dependent RNA helicase required for 60S ribosomal subunit synthesis. Involved in efficient pre-rRNA processing, predominantly at site A3, which is necessary for the normal formation of 25S and 5.8S rRNAs. This is ATP-dependent RNA helicase dbp-3 (dbp-3) from Neurospora crassa (strain ATCC 24698 / 74-OR23-1A / CBS 708.71 / DSM 1257 / FGSC 987).